The following is a 601-amino-acid chain: Translation initiation factor IF-2 (601 aa).

Residues 54 to 101 (GHTASAEPAPAQASGSPASPAQTEAQEAPQPTATATAEREPAAPPARE) are disordered. A compositionally biased stretch (low complexity) spans 57–89 (ASAEPAPAQASGSPASPAQTEAQEAPQPTATAT). Residues 104-273 (HRAPVVTIMG…SLTAELEDLR (170 aa)) form the tr-type G domain. A G1 region spans residues 113-120 (GHVDHGKT). 113-120 (GHVDHGKT) contacts GTP. The segment at 138 to 142 (GITQH) is G2. Positions 159-162 (DTPG) are G3. GTP contacts are provided by residues 159–163 (DTPGH) and 213–216 (NKVD). Positions 213 to 216 (NKVD) are G4. The G5 stretch occupies residues 249–251 (SAK).

The protein belongs to the TRAFAC class translation factor GTPase superfamily. Classic translation factor GTPase family. IF-2 subfamily.

Its subcellular location is the cytoplasm. One of the essential components for the initiation of protein synthesis. Protects formylmethionyl-tRNA from spontaneous hydrolysis and promotes its binding to the 30S ribosomal subunits. Also involved in the hydrolysis of GTP during the formation of the 70S ribosomal complex. This Deinococcus geothermalis (strain DSM 11300 / CIP 105573 / AG-3a) protein is Translation initiation factor IF-2.